A 90-amino-acid chain; its full sequence is Probable Fe(2+)-trafficking protein (90 aa).

It belongs to the Fe(2+)-trafficking protein family.

Its function is as follows. Could be a mediator in iron transactions between iron acquisition and iron-requiring processes, such as synthesis and/or repair of Fe-S clusters in biosynthetic enzymes. The sequence is that of Probable Fe(2+)-trafficking protein from Delftia acidovorans (strain DSM 14801 / SPH-1).